The chain runs to 153 residues: Glutamyl-tRNA(Gln) amidotransferase subunit C, mitochondrial (153 aa).

The disordered stretch occupies residues 31–55 (HPTKVPQQPEPNAFPDLDNNTDDDP).

The protein belongs to the GatC family. Subunit of the heterotrimeric GatCAB amidotransferase (AdT) complex, composed of A, B and C subunits.

Its subcellular location is the mitochondrion. The catalysed reaction is L-glutamyl-tRNA(Gln) + L-glutamine + ATP + H2O = L-glutaminyl-tRNA(Gln) + L-glutamate + ADP + phosphate + H(+). Its function is as follows. Allows the formation of correctly charged Gln-tRNA(Gln) through the transamidation of misacylated Glu-tRNA(Gln) in the mitochondria. The reaction takes place in the presence of glutamine and ATP through an activated gamma-phospho-Glu-tRNA(Gln). In Drosophila willistoni (Fruit fly), this protein is Glutamyl-tRNA(Gln) amidotransferase subunit C, mitochondrial.